We begin with the raw amino-acid sequence, 644 residues long: Uromodulin (644 aa).

The signal sequence occupies residues 1–26; it reads MGQLLSLTWLLLVMVVTPWFTVAGAN. One can recognise an EGF-like 1 domain in the interval 30-66; it reads EARRCSECHDNATCVLDGVVTTCSCQAGFTGDGLVCE. Intrachain disulfides connect C34–C43, C37–C52, C54–C65, C71–C84, C79–C93, C95–C107, C113–C127, C121–C136, C138–C149, C151–C162, C156–C173, C177–C270, C198–C285, C220–C258, C226–C290, C251–C259, C300–C309, C303–C318, C320–C350, C338–C428, and C369–C392. A glycan (N-linked (GlcNAc...) asparagine) is linked at N40. One can recognise an EGF-like 2; calcium-binding domain in the interval 67-108; that stretch reads DIDECATPWTHNCSNSICMNTLGSYECSCQDGFRLTPGLGCI. N-linked (GlcNAc...) asparagine glycosylation occurs at N78. Residues 109 to 150 form the EGF-like 3; calcium-binding domain; sequence DVNECTEQGLSNCHSLATCVNTEGSYSCVCPKGYRGDGWYCE. Positions 151–174 are beta hairpin; the sequence is CSPGFCEPGLDCLPQGPSGKLVCQ. A D10C region spans residues 175-294; sequence DPCNVYETLT…CNLAYCTDPS (120 aa). N235 is a glycosylation site (N-linked (GlcNAc...) asparagine). An N-linked (GlcNAc...) asparagine glycan is attached at N278. Residues 295–326 form the EGF-like 4 domain; sequence SVEGTCEECGVDEDCVSDNGRWRCQCKQDFNV. The N-linked (GlcNAc...) asparagine glycan is linked to N325. The tract at residues 337–432 is ZP-N; that stretch reads ECEANEIKIS…RINFECSYPL (96 aa). Positions 337–592 constitute a ZP domain; it reads ECEANEIKIS…PTCSGTRYRS (256 aa). N-linked (GlcNAc...) asparagine glycans are attached at residues N399 and N450. The interval 433-456 is flexible ZP-N/ZP-C linker; important for secretion and polymerization into filaments; sequence DMKVSLKTSLQPMVSALNISLGGT. The interval 457–467 is internal hydrophobic patch (IHP); sequence GKFTVQMALFQ. A ZP-C region spans residues 457-592; that stretch reads GKFTVQMALF…PTCSGTRYRS (136 aa). Cystine bridges form between C509/C569, C530/C585, and C574/C581. N-linked (GlcNAc...) asparagine glycosylation is present at N516. The essential for cleavage by HPN stretch occupies residues 589–592; that stretch reads RYRS. The external hydrophobic patch (EHP); regulates polymerization into filaments stretch occupies residues 601–609; it reads VLNLGPITR. Residue S615 is the site of GPI-anchor amidated serine attachment. Positions 616–644 are cleaved as a propeptide — removed in mature form; it reads VSKAASSNLGFLSIWLLLFLSATLTLMVH.

As to quaternary structure, homodimer that then polymerizes into long filaments. The filaments can additionally assemble laterally to form a sheet. The filaments consist of a zigzag-shaped backbone with laterally protruding arms which interact with bacterial adhesin fimH. Two fimH molecules can bind to a single UMOD monomer. N-glycosylated. Post-translationally, proteolytically cleaved at a conserved C-terminal proteolytic cleavage site to generate the secreted form found in urine. This cleavage is catalyzed by HPN. As to expression, expression restricted to the thick ascending limb of the loop of Henle (TALH).

It is found in the apical cell membrane. Its subcellular location is the basolateral cell membrane. It localises to the cell projection. The protein localises to the cilium membrane. The protein resides in the secreted. Functions in biogenesis and organization of the apical membrane of epithelial cells of the thick ascending limb of Henle's loop (TALH), where it promotes formation of complex filamentous gel-like structure that may play a role in the water barrier permeability. May serve as a receptor for binding and endocytosis of cytokines (IL-1, IL-2) and TNF. Facilitates neutrophil migration across renal epithelia. Functionally, in the urine, may contribute to colloid osmotic pressure, retards passage of positively charged electrolytes, and inhibits formation of liquid containing supersaturated salts and subsequent formation of salt crystals. Protects against urinary tract infections by binding to type 1 fimbriated E.coli. Binds to bacterial adhesin fimH which mediates the stable formation of bacterial aggregates, prevents the binding of E.coli to uroplakins UPK1A and UPK1B which act as urothelial receptors for type I fimbriae, and allows for pathogen clearance through micturation. Also promotes aggregation of other bacteria including K.pneumoniae, P.aeruginosa and S.mitis and so may also protect against other uropathogens. The polypeptide is Uromodulin (Umod) (Rattus norvegicus (Rat)).